Reading from the N-terminus, the 181-residue chain is Oligoribonuclease (181 aa).

Residues 8–171 enclose the Exonuclease domain; the sequence is LIWIDLEMTG…DDIRESVAEL (164 aa). Y129 is an active-site residue.

This sequence belongs to the oligoribonuclease family. In terms of assembly, homodimer.

Its subcellular location is the cytoplasm. In terms of biological role, 3'-to-5' exoribonuclease specific for small oligoribonucleotides. This chain is Oligoribonuclease, found in Escherichia coli O139:H28 (strain E24377A / ETEC).